The following is a 149-amino-acid chain: Cytochrome c-type biogenesis protein CcmE (149 aa).

The Cytoplasmic segment spans residues 1–7 (MTRKQKR). A helical; Signal-anchor for type II membrane protein transmembrane segment spans residues 8 to 28 (LAVIAGGVGFIMVAVLLVLFA). The Periplasmic portion of the chain corresponds to 29 to 149 (FGQSIAYFYM…GVWKGEGEAK (121 aa)). 2 residues coordinate heme: His-123 and Tyr-127.

It belongs to the CcmE/CycJ family.

The protein localises to the cell inner membrane. Its function is as follows. Heme chaperone required for the biogenesis of c-type cytochromes. Transiently binds heme delivered by CcmC and transfers the heme to apo-cytochromes in a process facilitated by CcmF and CcmH. This Allorhizobium ampelinum (strain ATCC BAA-846 / DSM 112012 / S4) (Agrobacterium vitis (strain S4)) protein is Cytochrome c-type biogenesis protein CcmE.